Here is a 239-residue protein sequence, read N- to C-terminus: MAKRSKAYLAAAEKIDADKLYSPLQAAKLAKETSSTKMDATVEVAVRLGVDPRKADQMVRGTVNLPHGTGKTARVIVFAVGEKAAEAEAAGADVVGAEDLIERIQGGWVDFDAAIATPDQMAKVGRIARVLGPRGLMPNPKTGTVTADVTKAVNDIKGGKINFRVDKQANLHFVIGKASFDDEKLVENYGAALDEILRAKPSSAKGRYVKKITVSTTTGPGIPVDPNRTRNLLEDAADA.

It belongs to the universal ribosomal protein uL1 family. As to quaternary structure, part of the 50S ribosomal subunit.

In terms of biological role, binds directly to 23S rRNA. The L1 stalk is quite mobile in the ribosome, and is involved in E site tRNA release. Its function is as follows. Protein L1 is also a translational repressor protein, it controls the translation of the L11 operon by binding to its mRNA. The protein is Large ribosomal subunit protein uL1 of Rhodococcus erythropolis (strain PR4 / NBRC 100887).